Here is a 699-residue protein sequence, read N- to C-terminus: SPS-sensor serine protease component SSY5 (699 aa).

Disordered regions lie at residues 1–113 (MVRF…LQGF) and 129–158 (VKEE…GNAR). The propeptide occupies 1–381 (MVRFFGLNKK…YCVKDYIKKA (381 aa)). The segment covering 24-38 (NEQNAAETSSSNVSG) has biased composition (polar residues). Over residues 39–51 (NEERIDPNSHDAN) the composition is skewed to basic and acidic residues. The span at 52 to 78 (PENANNDDASTTFGSSIQSSSIFSRGR) shows a compositional bias: low complexity. Residues 83–93 (TGASSSMATSE) show a composition bias toward polar residues. Composition is skewed to low complexity over residues 97–109 (HSSG…NSKN) and 144–154 (SSSTSSTLATS). Residues 459 to 699 (FAITCAHVVL…QWDIDPQLDG (241 aa)) form a serine protease region. Active-site charge relay system residues include His-465, Asp-545, and Ser-640.

This sequence belongs to the peptidase S64 family. In terms of assembly, component of the plasma membrane SPS (SSY1-PTR3-SSY5) amino acid sensor complex. Post-translationally, the propeptide is autoproteolytically cleaved from the catalytic domain but remains associated, forming an inactive protease complex. This processing occurs even in the absence of signaling.

It is found in the cell membrane. Its function is as follows. Protease component of the SPS-sensor system, which regulates the expression of several amino acid-metabolizing enzymes and amino acid- and peptide-permeases in response to extracellular amino acid levels by controlling the activity of two transcription factors, STP1 and STP2. Catalyzes the activation of these transcription factors, which are synthesized as latent cytoplasmic precursors, by proteolytic removal of an N-terminal inhibitory domain containing cytoplasmic retention motifs. SSY5 binds as an inactive protease complex to STP1. In response to extracellular amino acids and dependent on the other SPS-sensor components, the inhibitory propeptide is induced to dissociate, and thereby enables the catalytic domain to process STP1. This is SPS-sensor serine protease component SSY5 (SSY5) from Saccharomyces cerevisiae (strain YJM789) (Baker's yeast).